The chain runs to 239 residues: 1-(5-phosphoribosyl)-5-[(5-phosphoribosylamino)methylideneamino] imidazole-4-carboxamide isomerase (239 aa).

Asp-8 (proton acceptor) is an active-site residue. Catalysis depends on Asp-130, which acts as the Proton donor.

Belongs to the HisA/HisF family.

The protein localises to the cytoplasm. The enzyme catalyses 1-(5-phospho-beta-D-ribosyl)-5-[(5-phospho-beta-D-ribosylamino)methylideneamino]imidazole-4-carboxamide = 5-[(5-phospho-1-deoxy-D-ribulos-1-ylimino)methylamino]-1-(5-phospho-beta-D-ribosyl)imidazole-4-carboxamide. The protein operates within amino-acid biosynthesis; L-histidine biosynthesis; L-histidine from 5-phospho-alpha-D-ribose 1-diphosphate: step 4/9. In Streptococcus thermophilus (strain ATCC BAA-491 / LMD-9), this protein is 1-(5-phosphoribosyl)-5-[(5-phosphoribosylamino)methylideneamino] imidazole-4-carboxamide isomerase.